The chain runs to 445 residues: Pre-B-cell leukemia transcription factor 2 (445 aa).

Residues 13–44 (VGIPGLPIHGGPQTLTPHPMHEPPTDNGEPRK) are disordered. Positions 31–44 (PMHEPPTDNGEPRK) are enriched in basic and acidic residues. One can recognise a PBC domain in the interval 42–236 (PRKQDIGDIL…VMILRSRFLD (195 aa)). Residues 49–128 (DILQQIMTIT…EGVAGPEKGG (80 aa)) are PBC-A. A PBC-B region spans residues 131 to 236 (AAAAAAAAAS…VMILRSRFLD (106 aa)). The homeobox; TALE-type DNA-binding region spans 237–299 (ARRKRRNFSK…NKRIRYKKNI (63 aa)). A compositionally biased stretch (polar residues) spans 319–332 (QGGHSGANSPTTPT). Positions 319–338 (QGGHSGANSPTTPTSAGSGG) are disordered.

The protein belongs to the TALE/PBX homeobox family.

The protein resides in the nucleus. Transcriptional activator that binds the sequence 5'-ATCAATCAA-3'. This is Pre-B-cell leukemia transcription factor 2 (pbx2) from Xenopus laevis (African clawed frog).